The sequence spans 317 residues: Protein CbxX, chromosomal (317 aa).

Residues 1–21 form a disordered region; sequence MSAPETTAPLQPPAAPAASLP. 85–92 lines the ATP pocket; that stretch reads GNPGTGKT.

This sequence belongs to the CbxX/CfxQ family.

Its function is as follows. Seems to be necessary for the expression of RuBisCO. The chain is Protein CbxX, chromosomal (cbxXC) from Cupriavidus necator (strain ATCC 17699 / DSM 428 / KCTC 22496 / NCIMB 10442 / H16 / Stanier 337) (Ralstonia eutropha).